The following is a 400-amino-acid chain: S-adenosylmethionine synthase (400 aa).

136 to 141 (GQGSVD) is an ATP binding site.

The protein belongs to the AdoMet synthase 2 family. The cofactor is Mg(2+).

The catalysed reaction is L-methionine + ATP + H2O = S-adenosyl-L-methionine + phosphate + diphosphate. It participates in amino-acid biosynthesis; S-adenosyl-L-methionine biosynthesis; S-adenosyl-L-methionine from L-methionine: step 1/1. Its function is as follows. Catalyzes the formation of S-adenosylmethionine from methionine and ATP. This is S-adenosylmethionine synthase (mat) from Thermoplasma acidophilum (strain ATCC 25905 / DSM 1728 / JCM 9062 / NBRC 15155 / AMRC-C165).